The sequence spans 344 residues: 4-hydroxy-3-methylbut-2-en-1-yl diphosphate synthase (flavodoxin) (344 aa).

4 residues coordinate [4Fe-4S] cluster: Cys253, Cys256, Cys288, and Glu295.

The protein belongs to the IspG family. [4Fe-4S] cluster serves as cofactor.

The catalysed reaction is (2E)-4-hydroxy-3-methylbut-2-enyl diphosphate + oxidized [flavodoxin] + H2O + 2 H(+) = 2-C-methyl-D-erythritol 2,4-cyclic diphosphate + reduced [flavodoxin]. It functions in the pathway isoprenoid biosynthesis; isopentenyl diphosphate biosynthesis via DXP pathway; isopentenyl diphosphate from 1-deoxy-D-xylulose 5-phosphate: step 5/6. In terms of biological role, converts 2C-methyl-D-erythritol 2,4-cyclodiphosphate (ME-2,4cPP) into 1-hydroxy-2-methyl-2-(E)-butenyl 4-diphosphate. This Thermotoga maritima (strain ATCC 43589 / DSM 3109 / JCM 10099 / NBRC 100826 / MSB8) protein is 4-hydroxy-3-methylbut-2-en-1-yl diphosphate synthase (flavodoxin).